The following is a 149-amino-acid chain: Nucleoside diphosphate kinase (149 aa).

Residues Lys-9, Phe-57, Arg-85, Thr-91, Arg-102, and Asn-112 each coordinate ATP. Residue His-115 is the Pros-phosphohistidine intermediate of the active site.

Belongs to the NDK family. Mg(2+) serves as cofactor.

Its subcellular location is the cytoplasm. The catalysed reaction is a 2'-deoxyribonucleoside 5'-diphosphate + ATP = a 2'-deoxyribonucleoside 5'-triphosphate + ADP. It carries out the reaction a ribonucleoside 5'-diphosphate + ATP = a ribonucleoside 5'-triphosphate + ADP. Its function is as follows. Major role in the synthesis of nucleoside triphosphates other than ATP. The ATP gamma phosphate is transferred to the NDP beta phosphate via a ping-pong mechanism, using a phosphorylated active-site intermediate. The chain is Nucleoside diphosphate kinase from Methanosarcina acetivorans (strain ATCC 35395 / DSM 2834 / JCM 12185 / C2A).